The following is a 435-amino-acid chain: Oocyte zinc finger protein XlCOF22 (435 aa).

The segment at 71 to 92 is disordered; that stretch reads NANTSAHFSRNRDSDKHERTHT. Positions 80–91 are enriched in basic and acidic residues; that stretch reads RNRDSDKHERTH. 12 C2H2-type zinc fingers span residues 97-120, 126-148, 154-176, 182-204, 210-232, 238-260, 266-288, 294-316, 322-345, 351-373, 379-402, and 408-430; these read HSCS…RQSH, FSCS…QRTH, FCCF…RRTH, FSCL…QRTH, FSCF…QRTH, YSCS…RRTH, FSCS…RQTH, and VSCS…FKIH.

This sequence belongs to the krueppel C2H2-type zinc-finger protein family.

It is found in the nucleus. Functionally, may be involved in transcriptional regulation. The sequence is that of Oocyte zinc finger protein XlCOF22 from Xenopus laevis (African clawed frog).